We begin with the raw amino-acid sequence, 632 residues long: Mitochondrial distribution and morphology protein 34 (632 aa).

Residues 1 to 203 (MSFKVNWNSL…LPTLIHQLSL (203 aa)) enclose the SMP-LTD domain. Disordered stretches follow at residues 221–253 (ANAS…TSSL) and 384–435 (KPKR…SSTL). Positions 224–252 (STSSSSTSSTSSSTTSSSSSSSPSSFTSS) are enriched in low complexity. The segment covering 384–400 (KPKRRVIRLGKSKNKSK) has biased composition (basic residues). The span at 401 to 412 (SKTETKTEHNDE) shows a compositional bias: basic and acidic residues. The segment covering 422–435 (PLSSTPASSSSSTL) has biased composition (low complexity).

This sequence belongs to the MDM34 family. Component of the ER-mitochondria encounter structure (ERMES) or MDM complex, composed of MMM1, MDM10, MDM12 and MDM34.

Its subcellular location is the mitochondrion outer membrane. In terms of biological role, component of the ERMES/MDM complex, which serves as a molecular tether to connect the endoplasmic reticulum (ER) and mitochondria. Components of this complex are involved in the control of mitochondrial shape and protein biogenesis, and function in nonvesicular lipid trafficking between the ER and mitochondria. MDM34 is required for the interaction of the ER-resident membrane protein MMM1 and the outer mitochondrial membrane-resident beta-barrel protein MDM10. This Lodderomyces elongisporus (strain ATCC 11503 / CBS 2605 / JCM 1781 / NBRC 1676 / NRRL YB-4239) (Yeast) protein is Mitochondrial distribution and morphology protein 34.